Here is a 497-residue protein sequence, read N- to C-terminus: POU domain, class 3, transcription factor 3 (497 aa).

Gly residues predominate over residues 31 to 51 (GGGGGGGGGGGGAGGGGGGMQ). Disordered regions lie at residues 31 to 62 (GGGGGGGGGGGGAGGGGGGMQPGSAAVTSGAY), 121 to 189 (WSGS…WGAA), 230 to 316 (NGML…TPTS), and 458 to 497 (EKRMTPPGIQQQTPDDVYSQVGTVSADTPPPHHGLQTSVQ). 2 stretches are compositionally biased toward pro residues: residues 133–145 (QQPPRPPPPPPQG) and 170–180 (HLGPPPPPPHQ). The span at 240–250 (GGGGGGAGGGA) shows a compositional bias: gly residues. Residues 269–286 (HHHHHHHHAHPHPPHPHH) show a composition bias toward basic residues. The POU-specific domain occupies 311–385 (EDTPTSDDLE…LLNKWLEEAD (75 aa)). A DNA-binding region (homeobox) is located at residues 403-462 (KRKKRTSIEVSVKGALESHFLKCPKPSAQEITNLADSLQLEKEVVRVWFCNRRQKEKRMT). The span at 465–483 (GIQQQTPDDVYSQVGTVSA) shows a compositional bias: polar residues.

This sequence belongs to the POU transcription factor family. Class-3 subfamily. As to quaternary structure, homodimer. Brain.

It is found in the nucleus. Transcription factor that acts synergistically with SOX11 and SOX4. Plays a role in neuronal development. Is implicated in an enhancer activity at the embryonic met-mesencephalic junction; the enhancer element contains the octamer motif (5'-ATTTGCAT-3'). The chain is POU domain, class 3, transcription factor 3 (Pou3f3) from Rattus norvegicus (Rat).